A 750-amino-acid chain; its full sequence is uncharacterized protein (750 aa).

N-linked (GlcNAc...) asparagine glycosylation is found at asparagine 61, asparagine 84, asparagine 115, asparagine 154, asparagine 176, asparagine 197, asparagine 207, asparagine 228, asparagine 241, asparagine 267, asparagine 293, asparagine 299, asparagine 312, asparagine 335, asparagine 351, asparagine 373, asparagine 389, and asparagine 519. Phosphoserine occurs at positions 675 and 678. Lysine 697 participates in a covalent cross-link: Glycyl lysine isopeptide (Lys-Gly) (interchain with G-Cter in ubiquitin). Composition is skewed to polar residues over residues 703–726 (EITAIDNSSSANNTDVTGSTSNRT) and 736–750 (KDSNGPVNNNAHLVA). The disordered stretch occupies residues 703 to 750 (EITAIDNSSSANNTDVTGSTSNRTELSHPDVTPKDSNGPVNNNAHLVA). N-linked (GlcNAc...) asparagine glycosylation is found at asparagine 709, asparagine 714, and asparagine 724.

N-glycosylated.

Its subcellular location is the mitochondrion. This is an uncharacterized protein from Saccharomyces cerevisiae (strain ATCC 204508 / S288c) (Baker's yeast).